The primary structure comprises 419 residues: Peptide chain release factor subunit 1 (419 aa).

The protein belongs to the eukaryotic release factor 1 family. As to quaternary structure, heterodimer of two subunits, one of which binds GTP.

The protein localises to the cytoplasm. In terms of biological role, directs the termination of nascent peptide synthesis (translation) in response to the termination codons UAA, UAG and UGA. The polypeptide is Peptide chain release factor subunit 1 (Methanococcus vannielii (strain ATCC 35089 / DSM 1224 / JCM 13029 / OCM 148 / SB)).